A 46-amino-acid chain; its full sequence is Major urinary protein (46 aa).

Asn-15 carries an N-linked (GlcNAc...) asparagine glycan.

This sequence belongs to the calycin superfamily. Lipocalin family. In terms of tissue distribution, found in many tissues including liver, urine, preputial gland, clitoral gland, submandibular gland and salivary gland.

Its subcellular location is the secreted. In terms of biological role, binds pheromones that are released from drying urine of males. These pheromones affect the sexual behavior of females. Acts as a shuttle for pheromonal communication between individuals of the same species. The sequence is that of Major urinary protein from Rattus rattus (Black rat).